A 253-amino-acid chain; its full sequence is uncharacterized protein (253 aa).

Residue Ser145 participates in substrate binding. Catalysis depends on Tyr159, which acts as the Proton acceptor.

The protein belongs to the short-chain dehydrogenases/reductases (SDR) family.

This is an uncharacterized protein from Mycobacterium tuberculosis (strain CDC 1551 / Oshkosh).